The sequence spans 139 residues: AP-4 complex subunit sigma (139 aa).

It belongs to the adaptor complexes small subunit family. In terms of assembly, may be part of the adaptor protein complex 4 (AP-4), a heterotetramer composed of two large adaptins (epsilon-type subunitand beta-type subunit), a medium adaptin (mu-type subunit) and a small adaptin (sigma-type).

It is found in the golgi apparatus. It localises to the trans-Golgi network membrane. Probable component of an adaptor protein complex. Adaptor protein complexes are vesicle coat components involved both in vesicle formation and cargo selection. They control the vesicular transport of proteins in different trafficking pathways. The polypeptide is AP-4 complex subunit sigma (Dictyostelium discoideum (Social amoeba)).